The chain runs to 23 residues: Basic phospholipase A2 Smb-N6 (23 aa).

The protein belongs to the phospholipase A2 family. Group II subfamily. Ca(2+) is required as a cofactor. In terms of processing, contains 7 disulfide bonds. In terms of tissue distribution, expressed by the venom gland.

The protein resides in the secreted. The catalysed reaction is a 1,2-diacyl-sn-glycero-3-phosphocholine + H2O = a 1-acyl-sn-glycero-3-phosphocholine + a fatty acid + H(+). Snake venom phospholipase A2 (PLA2) that shows myotoxic activities. PLA2 catalyzes the calcium-dependent hydrolysis of the 2-acyl groups in 3-sn-phosphoglycerides. This is Basic phospholipase A2 Smb-N6 from Sistrurus miliarius barbouri (Dusky pigmy rattlesnake).